A 103-amino-acid chain; its full sequence is Thioredoxin-1 (103 aa).

Residues valine 2–alanine 103 form the Thioredoxin domain. Active-site nucleophile residues include cysteine 30 and cysteine 33. Cysteine 30 and cysteine 33 are oxidised to a cystine. Glycyl lysine isopeptide (Lys-Gly) (interchain with G-Cter in ubiquitin) cross-links involve residues lysine 54, lysine 66, and lysine 96.

Belongs to the thioredoxin family. Monomer. Part of the heterodimeric LMA1 complex together with the proteinase inhibitor PBI2. Most of the thioredoxin of yeast is in this complex rather than the well-studied monomer. LMA1 binds to the ATPase SEC18. In terms of processing, reversible disulfide bond formation between Cys-30 and Cys-33, reverted by thioredoxin reductase TRR1 using NADPH as hydrogen donor.

Its subcellular location is the nucleus. It is found in the cytoplasm. The protein resides in the golgi apparatus membrane. The protein localises to the mitochondrion intermembrane space. Functionally, participates as a hydrogen donor in redox reactions through the reversible oxidation of its active center dithiol to a disulfide, accompanied by the transfer of 2 electrons and 2 protons. It is involved in many cellular processes, including deoxyribonucleotide synthesis, repair of oxidatively damaged proteins, protein folding, sulfur metabolism, and redox homeostasis. Thioredoxin-dependent enzymes include phosphoadenosine-phosphosulfate reductase MET16, alkyl-hydroperoxide reductase DOT5, thioredoxin peroxidases TSA1 and TSA2, alkyl hydroperoxide reductase AHP1, and peroxiredoxin HYR1. Thioredoxin is also involved in protection against reducing stress. As part of the LMA1 complex, it is involved in the facilitation of vesicle fusion such as homotypic vacuole and ER-derived COPII vesicle fusion with the Golgi. This activity does not require the redox mechanism. This is Thioredoxin-1 (TRX1) from Saccharomyces cerevisiae (strain ATCC 204508 / S288c) (Baker's yeast).